The following is a 778-amino-acid chain: Endonuclease MutS2 (778 aa).

ATP is bound at residue 328–335 (GPNTGGKT). A Smr domain is found at 702–777 (LDLRGKRYEE…GSGATIVTFK (76 aa)).

Belongs to the DNA mismatch repair MutS family. MutS2 subfamily. In terms of assembly, homodimer. Binds to stalled ribosomes, contacting rRNA.

Endonuclease that is involved in the suppression of homologous recombination and thus may have a key role in the control of bacterial genetic diversity. In terms of biological role, acts as a ribosome collision sensor, splitting the ribosome into its 2 subunits. Detects stalled/collided 70S ribosomes which it binds and splits by an ATP-hydrolysis driven conformational change. Acts upstream of the ribosome quality control system (RQC), a ribosome-associated complex that mediates the extraction of incompletely synthesized nascent chains from stalled ribosomes and their subsequent degradation. Probably generates substrates for RQC. This Streptococcus pneumoniae (strain ATCC 700669 / Spain 23F-1) protein is Endonuclease MutS2.